We begin with the raw amino-acid sequence, 240 residues long: Protein MGARP (240 aa).

Topologically, residues 1–40 (MYLRRAVSKTLALPLRAPPNPAPLGKDASLRRMSSNRFPG) are cytoplasmic. Residues 41-63 (SSGSNMIYYLVVGVTVSAGGYYA) traverse the membrane as a helical; Anchor for type IV membrane protein segment. Residues 64–240 (YKTVTSDQAK…VGSEAASAQG (177 aa)) lie on the Mitochondrial intermembrane side of the membrane. The interval 166–240 (RETTEVNPET…VGSEAASAQG (75 aa)) is disordered. Residues 170–181 (EVNPETTPEVTN) show a composition bias toward low complexity. Basic and acidic residues predominate over residues 191–201 (DNDKDTTKNET). Residues 202-213 (SDEYAELEEENS) are compositionally biased toward acidic residues. Over residues 228–240 (EASVGSEAASAQG) the composition is skewed to low complexity.

Interacts with RHOT1/Miro-1, TRAK1/OIP106 and TRAK2/GRIF1. Interacts with RHOT2/Miro-2. Expressed in the brain, adrenal gland and corneal endothelium (CE). Expressed in steroid-producing cells of the ovary and testis (at protein level). Expressed in steroid-producing cells of the ovary and testis. Weakly expressed in placenta. Expressed in corneal endothelial cells.

Its subcellular location is the mitochondrion. The protein resides in the mitochondrion outer membrane. It localises to the mitochondrion inner membrane. Functionally, plays a role in the trafficking of mitochondria along microtubules. Regulates the kinesin-mediated axonal transport of mitochondria to nerve terminals along microtubules during hypoxia. Participates in the translocation of TRAK2/GRIF1 from the cytoplasm to the mitochondrion. Also plays a role in steroidogenesis through maintenance of mitochondrial abundance and morphology. Plays an inhibitory role during neocortex development by regulating mitochondrial morphology, distribution and motility in neocortical neurons. This is Protein MGARP (MGARP) from Homo sapiens (Human).